A 782-amino-acid chain; its full sequence is Ribosome biogenesis protein ERB1 (782 aa).

Disordered regions lie at residues 1 to 123 (MGSK…RIEK) and 339 to 361 (PEEY…EDRE). Residues 35 to 86 (SEDEEDYLPSDDDDDVEDSENEGTGASEDDDDDDDDDDILSDDIPSDVDSEE) are compositionally biased toward acidic residues. Positions 105-123 (VDPKREEDDGADRNYRIEK) are enriched in basic and acidic residues. WD repeat units follow at residues 433-472 (GHEG…QVWS), 476-516 (NSEE…VTPA), 567-609 (TVRS…TQIP), 612-650 (KLSG…LVKV), 653-692 (PGAK…RPYK), 696-736 (FHGQ…DQLE), and 752-782 (VSKL…RLWM).

The protein belongs to the WD repeat BOP1/ERB1 family. Component of the NOP7 complex, composed of ERB1, NOP7 and YTM1. The complex is held together by ERB1, which interacts with NOP7 via its N-terminal domain and with YTM1 via a high-affinity interaction between the seven-bladed beta-propeller domains of the 2 proteins. The NOP7 complex associates with the 66S pre-ribosome.

It is found in the nucleus. The protein resides in the nucleolus. Its subcellular location is the nucleoplasm. In terms of biological role, component of the NOP7 complex, which is required for maturation of the 25S and 5.8S ribosomal RNAs and formation of the 60S ribosome. This Chaetomium globosum (strain ATCC 6205 / CBS 148.51 / DSM 1962 / NBRC 6347 / NRRL 1970) (Soil fungus) protein is Ribosome biogenesis protein ERB1.